Here is a 229-residue protein sequence, read N- to C-terminus: Lipoprotein-releasing system ATP-binding protein LolD (229 aa).

An ABC transporter domain is found at histidine 9–valine 228. ATP is bound at residue glycine 42–serine 49.

This sequence belongs to the ABC transporter superfamily. Lipoprotein translocase (TC 3.A.1.125) family. The complex is composed of two ATP-binding proteins (LolD) and two transmembrane proteins (LolC and LolE).

The protein resides in the cell inner membrane. Part of the ABC transporter complex LolCDE involved in the translocation of mature outer membrane-directed lipoproteins, from the inner membrane to the periplasmic chaperone, LolA. Responsible for the formation of the LolA-lipoprotein complex in an ATP-dependent manner. The polypeptide is Lipoprotein-releasing system ATP-binding protein LolD (Photobacterium profundum (strain SS9)).